The following is a 443-amino-acid chain: Tubulin beta-1 chain (443 aa).

GTP contacts are provided by Gln11, Glu69, Ser138, Gly142, Thr143, Gly144, Asn204, and Asn226. Glu69 contacts Mg(2+). The segment at 424 to 443 is disordered; the sequence is QYQDATAEREGEYEEDYDEA. Over residues 434–443 the composition is skewed to acidic residues; sequence GEYEEDYDEA.

Belongs to the tubulin family. Dimer of alpha and beta chains. A typical microtubule is a hollow water-filled tube with an outer diameter of 25 nm and an inner diameter of 15 nM. Alpha-beta heterodimers associate head-to-tail to form protofilaments running lengthwise along the microtubule wall with the beta-tubulin subunit facing the microtubule plus end conferring a structural polarity. Microtubules usually have 13 protofilaments but different protofilament numbers can be found in some organisms and specialized cells. Mg(2+) serves as cofactor.

The protein resides in the cytoplasm. It is found in the cytoskeleton. Tubulin is the major constituent of microtubules, a cylinder consisting of laterally associated linear protofilaments composed of alpha- and beta-tubulin heterodimers. Microtubules grow by the addition of GTP-tubulin dimers to the microtubule end, where a stabilizing cap forms. Below the cap, tubulin dimers are in GDP-bound state, owing to GTPase activity of alpha-tubulin. This Anemia phyllitidis (Fern) protein is Tubulin beta-1 chain (TUBB1).